Here is a 473-residue protein sequence, read N- to C-terminus: Mitochondrial distribution and morphology protein 10 (473 aa).

This sequence belongs to the MDM10 family. As to quaternary structure, component of the ER-mitochondria encounter structure (ERMES) or MDM complex, composed of MMM1, MDM10, MDM12 and MDM34. Associates with the mitochondrial outer membrane sorting assembly machinery SAM(core) complex.

It localises to the mitochondrion outer membrane. In terms of biological role, component of the ERMES/MDM complex, which serves as a molecular tether to connect the endoplasmic reticulum and mitochondria. Components of this complex are involved in the control of mitochondrial shape and protein biogenesis and may function in phospholipid exchange. MDM10 is involved in the late assembly steps of the general translocase of the mitochondrial outer membrane (TOM complex). Functions in the TOM40-specific route of the assembly of outer membrane beta-barrel proteins, including the association of TOM40 with the receptor TOM22 and small TOM proteins. Can associate with the SAM(core) complex as well as the MDM12-MMM1 complex, both involved in late steps of the major beta-barrel assembly pathway, that is responsible for biogenesis of all outer membrane beta-barrel proteins. May act as a switch that shuttles between both complexes and channels precursor proteins into the TOM40-specific pathway. Plays a role in mitochondrial morphology and in the inheritance of mitochondria. This Candida albicans (strain WO-1) (Yeast) protein is Mitochondrial distribution and morphology protein 10.